We begin with the raw amino-acid sequence, 396 residues long: Probable protein phosphatase 2C 25 (396 aa).

The segment at Glu32 to Lys98 is disordered. A compositionally biased stretch (low complexity) spans Gln44–Pro61. In terms of domain architecture, PPM-type phosphatase spans Gly139 to Leu392. 4 residues coordinate Mn(2+): Asp175, Gly176, Asp338, and Asp383.

Belongs to the PP2C family. In terms of assembly, interacts with MPK4 and MPK6. The cofactor is Mg(2+). Mn(2+) is required as a cofactor.

The protein resides in the cytoplasm. Its subcellular location is the nucleus. It carries out the reaction O-phospho-L-seryl-[protein] + H2O = L-seryl-[protein] + phosphate. It catalyses the reaction O-phospho-L-threonyl-[protein] + H2O = L-threonyl-[protein] + phosphate. In terms of biological role, protein phosphatase that negatively regulates defense respones. Inactivates MPK4 and MPK6 MAP kinases involved in stress and defense signaling. The polypeptide is Probable protein phosphatase 2C 25 (Arabidopsis thaliana (Mouse-ear cress)).